A 200-amino-acid chain; its full sequence is Imidazole glycerol phosphate synthase subunit HisH (200 aa).

One can recognise a Glutamine amidotransferase type-1 domain in the interval 3–200 (DVALIDAGGA…LRNFLEMSFP (198 aa)). The active-site Nucleophile is Cys-78. Residues His-179 and Glu-181 contribute to the active site.

As to quaternary structure, heterodimer of HisH and HisF.

The protein localises to the cytoplasm. It carries out the reaction 5-[(5-phospho-1-deoxy-D-ribulos-1-ylimino)methylamino]-1-(5-phospho-beta-D-ribosyl)imidazole-4-carboxamide + L-glutamine = D-erythro-1-(imidazol-4-yl)glycerol 3-phosphate + 5-amino-1-(5-phospho-beta-D-ribosyl)imidazole-4-carboxamide + L-glutamate + H(+). It catalyses the reaction L-glutamine + H2O = L-glutamate + NH4(+). The protein operates within amino-acid biosynthesis; L-histidine biosynthesis; L-histidine from 5-phospho-alpha-D-ribose 1-diphosphate: step 5/9. Functionally, IGPS catalyzes the conversion of PRFAR and glutamine to IGP, AICAR and glutamate. The HisH subunit catalyzes the hydrolysis of glutamine to glutamate and ammonia as part of the synthesis of IGP and AICAR. The resulting ammonia molecule is channeled to the active site of HisF. The protein is Imidazole glycerol phosphate synthase subunit HisH of Xanthomonas euvesicatoria pv. vesicatoria (strain 85-10) (Xanthomonas campestris pv. vesicatoria).